The chain runs to 134 residues: Acyl carrier protein, mitochondrial (134 aa).

A mitochondrion-targeting transit peptide spans 1-46 (MFRTAALTAARVARPAVASAVRAGVARPAFVQAVPKVAAFQAVRFY). The Carrier domain maps to 55–131 (DEVFSRIAQV…KAVEYILSQP (77 aa)). Ser91 is modified (O-(pantetheine 4'-phosphoryl)serine).

This sequence belongs to the acyl carrier protein (ACP) family. As to quaternary structure, complex I is composed of about 30 different subunits. In terms of processing, 4'-phosphopantetheine is transferred from CoA to a specific serine of apo-ACP by acpS. This modification is essential for activity because fatty acids are bound in thioester linkage to the sulfhydryl of the prosthetic group.

The protein localises to the mitochondrion. The protein operates within lipid metabolism; fatty acid biosynthesis. Functionally, carrier of the growing fatty acid chain in fatty acid biosynthesis. May be involved in the synthesis of very-long-chain fatty acids. Accessory and non-catalytic subunit of the mitochondrial membrane respiratory chain NADH dehydrogenase (Complex I), which functions in the transfer of electrons from NADH to the respiratory chain. The sequence is that of Acyl carrier protein, mitochondrial (nuo-12) from Neurospora crassa (strain ATCC 24698 / 74-OR23-1A / CBS 708.71 / DSM 1257 / FGSC 987).